The chain runs to 199 residues: Pyridoxine/pyridoxamine 5'-phosphate oxidase (199 aa).

Residues 44–49, 59–60, K66, and Q91 contribute to the FMN site; these read RTVLLK and YS. A substrate-binding site is contributed by K49. Substrate is bound by residues Y109, R113, and S117. FMN is bound by residues 126–127 and W171; that span reads QS. 177 to 179 lines the substrate pocket; sequence RLH. R181 provides a ligand contact to FMN.

The protein belongs to the pyridoxamine 5'-phosphate oxidase family. As to quaternary structure, homodimer. The cofactor is FMN.

The enzyme catalyses pyridoxamine 5'-phosphate + O2 + H2O = pyridoxal 5'-phosphate + H2O2 + NH4(+). It carries out the reaction pyridoxine 5'-phosphate + O2 = pyridoxal 5'-phosphate + H2O2. The protein operates within cofactor metabolism; pyridoxal 5'-phosphate salvage; pyridoxal 5'-phosphate from pyridoxamine 5'-phosphate: step 1/1. It participates in cofactor metabolism; pyridoxal 5'-phosphate salvage; pyridoxal 5'-phosphate from pyridoxine 5'-phosphate: step 1/1. Catalyzes the oxidation of either pyridoxine 5'-phosphate (PNP) or pyridoxamine 5'-phosphate (PMP) into pyridoxal 5'-phosphate (PLP). This is Pyridoxine/pyridoxamine 5'-phosphate oxidase from Xanthomonas oryzae pv. oryzae (strain KACC10331 / KXO85).